The chain runs to 309 residues: Aspartate carbamoyltransferase catalytic subunit (309 aa).

Residues arginine 49 and threonine 50 each contribute to the carbamoyl phosphate site. Lysine 77 contacts L-aspartate. Carbamoyl phosphate-binding residues include arginine 99, histidine 127, and glutamine 130. The L-aspartate site is built by arginine 160 and arginine 211. Residues alanine 252 and proline 253 each contribute to the carbamoyl phosphate site.

It belongs to the aspartate/ornithine carbamoyltransferase superfamily. ATCase family. As to quaternary structure, heterododecamer (2C3:3R2) of six catalytic PyrB chains organized as two trimers (C3), and six regulatory PyrI chains organized as three dimers (R2).

It catalyses the reaction carbamoyl phosphate + L-aspartate = N-carbamoyl-L-aspartate + phosphate + H(+). It functions in the pathway pyrimidine metabolism; UMP biosynthesis via de novo pathway; (S)-dihydroorotate from bicarbonate: step 2/3. In terms of biological role, catalyzes the condensation of carbamoyl phosphate and aspartate to form carbamoyl aspartate and inorganic phosphate, the committed step in the de novo pyrimidine nucleotide biosynthesis pathway. The chain is Aspartate carbamoyltransferase catalytic subunit from Geobacillus sp. (strain WCH70).